Here is a 340-residue protein sequence, read N- to C-terminus: Putative pyridoxal kinase C18.10 (340 aa).

Substrate-binding residues include Ser19 and Tyr130. ATP contacts are provided by residues 189–190 (TS) and 218–230 (QFPS…TGTG). Asp231 is a substrate binding site.

The protein belongs to the pyridoxine kinase family. A divalent metal cation is required as a cofactor.

The protein resides in the cytoplasm. The protein localises to the nucleus. It catalyses the reaction pyridoxal + ATP = pyridoxal 5'-phosphate + ADP + H(+). Functionally, required for synthesis of pyridoxal-5-phosphate from vitamin B6. The chain is Putative pyridoxal kinase C18.10 from Schizosaccharomyces pombe (strain 972 / ATCC 24843) (Fission yeast).